The chain runs to 183 residues: Putative 3-methyladenine DNA glycosylase (183 aa).

The protein belongs to the DNA glycosylase MPG family.

In Legionella pneumophila (strain Corby), this protein is Putative 3-methyladenine DNA glycosylase.